The sequence spans 198 residues: FMN-dependent NADH:quinone oxidoreductase (198 aa).

Residues serine 10, serine 16 to serine 18, methionine 94 to phenylalanine 97, and threonine 138 to glycine 141 contribute to the FMN site.

The protein belongs to the azoreductase type 1 family. Homodimer. FMN is required as a cofactor.

The enzyme catalyses 2 a quinone + NADH + H(+) = 2 a 1,4-benzosemiquinone + NAD(+). It carries out the reaction N,N-dimethyl-1,4-phenylenediamine + anthranilate + 2 NAD(+) = 2-(4-dimethylaminophenyl)diazenylbenzoate + 2 NADH + 2 H(+). Quinone reductase that provides resistance to thiol-specific stress caused by electrophilic quinones. Its function is as follows. Also exhibits azoreductase activity. Catalyzes the reductive cleavage of the azo bond in aromatic azo compounds to the corresponding amines. The chain is FMN-dependent NADH:quinone oxidoreductase from Shewanella sp. (strain ANA-3).